The primary structure comprises 440 residues: Xaa-Pro dipeptidase (440 aa).

Asp244, Asp255, His335, Glu380, and Glu419 together coordinate Mn(2+).

This sequence belongs to the peptidase M24B family. Bacterial-type prolidase subfamily. Mn(2+) is required as a cofactor.

It carries out the reaction Xaa-L-Pro dipeptide + H2O = an L-alpha-amino acid + L-proline. Splits dipeptides with a prolyl residue in the C-terminal position. This Shewanella loihica (strain ATCC BAA-1088 / PV-4) protein is Xaa-Pro dipeptidase.